The following is a 37-amino-acid chain: Peptide encoded by miPEP164a (37 aa).

Regulatory peptide encoded by the primary transcript (pri-miR164a) of the microRNA miR164a that enhances the accumulation of its corresponding mature miRNA. Acts probably as a transcriptional activator of its corresponding pri-miRNA. The sequence is that of Peptide encoded by miPEP164a from Arabidopsis thaliana (Mouse-ear cress).